Here is a 379-residue protein sequence, read N- to C-terminus: MSSSTIKTLAVAVTLLHLTRLALSTCPAACHCPLEAPKCAPGVGLVRDGCGCCKVCAKQLNEDCSKTQPCDHTKGLECNFGASSTALKGICRAQSEGRPCEYNSRIYQNGESFQPNCKHQCTCIDGAVGCIPLCPQELSLPNLGCPNPRLVKVSGQCCEEWVCDEDSIKDSLDDQDDLLGFDASEVELTRNNELIAIGKGSSLKRLPVFGTEPRVLYNPLHAHGQKCIVQTTSWSQCSKSCGTGISTRVTNDNSECRLVKETRICEVRPCGQPVYSSLKKGKKCSKTKKSPEPVRFTYAGCSSVKKYRPKYCGSCVDGRCCTPLQTRTVKMRFRCEDGEMFSKNVMMIQSCKCNYNCPHPNEASFRLYSLFNDIHKFRD.

The first 24 residues, 1-24 (MSSSTIKTLAVAVTLLHLTRLALS), serve as a signal peptide directing secretion. An IGFBP N-terminal domain is found at 25-94 (TCPAACHCPL…TALKGICRAQ (70 aa)). Disulfide bonds link C26/C50, C30/C52, C32/C53, C39/C56, C64/C78, and C70/C91. The VWFC domain maps to 98–164 (RPCEYNSRIY…GQCCEEWVCD (67 aa)). S184 carries the post-translational modification Phosphoserine. Positions 226–271 (KCIVQTTSWSQCSKSCGTGISTRVTNDNSECRLVKETRICEVRPCG) constitute a TSP type-1 domain. The segment at 277–313 (SLKKGKKCSKTKKSPEPVRFTYAGCSSVKKYRPKYCG) is heparin-binding. 5 disulfide bridges follow: C284–C321, C301–C335, C312–C351, C315–C353, and C320–C357. Residues 284–358 (CSKTKKSPEP…QSCKCNYNCP (75 aa)) form the CTCK domain.

The protein belongs to the CCN family. As to quaternary structure, interaction with integrins is heparin- and cell-type-dependent and promotes cell adhesion.

The protein localises to the secreted. Promotes cell proliferation, chemotaxis, angiogenesis and cell adhesion. Appears to play a role in wound healing by up-regulating, in skin fibroblasts, the expression of a number of genes involved in angiogenesis, inflammation and matrix remodeling including VEGA-A, VEGA-C, MMP1, MMP3, TIMP1, uPA, PAI-1 and integrins alpha-3 and alpha-5. CCN1-mediated gene regulation is dependent on heparin-binding. Down-regulates the expression of alpha-1 and alpha-2 subunits of collagen type-1. Promotes cell adhesion and adhesive signaling through integrin alpha-6/beta-1, cell migration through integrin alpha-1/beta-5 and cell proliferation through integrin alpha-v/beta-3. In Rattus norvegicus (Rat), this protein is CCN family member 1.